A 670-amino-acid polypeptide reads, in one-letter code: DNA topoisomerase 6 subunit B (670 aa).

A disordered region spans residues 1–30; it reads MAGDDLVETKKGSSKNSKDSNESKLKQKSP. Residues 7 to 25 are compositionally biased toward basic and acidic residues; that stretch reads VETKKGSSKNSKDSNESKL. ATP is bound by residues asparagine 60, aspartate 160, 181–182, 190–197, and lysine 516; these read TK and GKFGLGAK.

It belongs to the TOP6B family. Homodimer. Heterotetramer of two TOP6A and two TOP6B subunits. Interacts with SPO11-2, but not with SPO11-1, RHL1 or BIN4. As to expression, highly expressed in leaves, stems, flowers and seedlings.

It is found in the nucleus. It carries out the reaction ATP-dependent breakage, passage and rejoining of double-stranded DNA.. Functionally, component of the DNA topoisomerase VI involved in chromatin organization and progression of endoreduplication cycles. Relaxes both positive and negative superturns and exhibits a strong decatenase activity. The B subunit binds ATP. Involved in cell-elongation processes. This Arabidopsis thaliana (Mouse-ear cress) protein is DNA topoisomerase 6 subunit B.